A 74-amino-acid polypeptide reads, in one-letter code: Exodeoxyribonuclease 7 small subunit (74 aa).

It belongs to the XseB family. As to quaternary structure, heterooligomer composed of large and small subunits.

The protein resides in the cytoplasm. The enzyme catalyses Exonucleolytic cleavage in either 5'- to 3'- or 3'- to 5'-direction to yield nucleoside 5'-phosphates.. Bidirectionally degrades single-stranded DNA into large acid-insoluble oligonucleotides, which are then degraded further into small acid-soluble oligonucleotides. The polypeptide is Exodeoxyribonuclease 7 small subunit (Ruthia magnifica subsp. Calyptogena magnifica).